The following is a 1464-amino-acid chain: Gag-Pol polyprotein (1464 aa).

Residue Gly-2 is the site of N-myristoyl glycine; by host attachment. The segment at 7–31 (VLRGKKADELEKIRLRPSGKKKYRL) is interaction with Gp41. A Nuclear export signal motif is present at residues 16 to 22 (LEKIRLR). Positions 26–32 (KKKYRLK) match the Nuclear localization signal motif. The segment at 108–146 (LGAETGTAEKMPSTSRPTAPPSGRGRNFPVQQTGGGNYI) is disordered. Residues 192-229 (NCVGDHQAAMQIIREIINDEAADWDAQHPIPGPLPAGQ) form an interaction with human PPIA/CYPA and NUP153 region. The dimerization/Multimerization of capsid protein p24 stretch occupies residues 280-366 (YNPTNILDVK…GGPGQKARLM (87 aa)). 2 consecutive CCHC-type zinc fingers follow at residues 390-407 (IRCW…QCRA) and 411-428 (QGCW…KCPE). Residues 434–509 (LRDGSMGKEA…GKSTSQRGDR (76 aa)) are disordered. Residues 459–468 (STPSRSSSGS) show a composition bias toward low complexity. Residues 477–492 (ERAEGAEGETIQRGDG) show a composition bias toward basic and acidic residues. The tract at residues 514–518 (PQFSL) is dimerization of protease. Residues 533 to 602 (VEVLLDTGAD…TPINIFGRNI (70 aa)) enclose the Peptidase A2 domain. The For protease activity; shared with dimeric partner role is filled by Asp-538. Dimerization of protease stretches follow at residues 562–568 (GIGGFIN) and 601–613 (NILT…LNLP). The 191-residue stretch at 656–846 (EGQLEEAPPT…PPLQWMGYEL (191 aa)) folds into the Reverse transcriptase domain. Mg(2+) contacts are provided by Asp-722, Asp-797, and Asp-798. The segment at 839-847 (LQWMGYELW) is RT 'primer grip'. A Tryptophan repeat motif motif is present at residues 1009 to 1025 (WEQWWDNYWQVTWIPEW). Residues 1045–1168 (IPGAETFYTD…VDHLVSQGIR (124 aa)) enclose the RNase H type-1 domain. Mg(2+) contacts are provided by Asp-1054, Glu-1089, Asp-1109, and Asp-1160. The Integrase-type zinc finger occupies 1174–1215 (ERIEPAQEEHEKYHSNMKELTHKFGIPQLVARQIVNTCAQCQ). Zn(2+)-binding residues include His-1183, His-1187, Cys-1211, and Cys-1214. One can recognise an Integrase catalytic domain in the interval 1224–1375 (QVNAEIGVWQ…TPAERLINMI (152 aa)). The Mg(2+) site is built by Asp-1235, Asp-1287, and Glu-1323. Positions 1394 to 1441 (FQVYYREGRDQLWKGPGELLWKGDGAVIVKVGADIKVIPRRKAKIIRD) form a DNA-binding region, integrase-type.

As to quaternary structure, homotrimer; further assembles as hexamers of trimers. Interacts with gp41 (via C-terminus). Interacts with host CALM1; this interaction induces a conformational change in the Matrix protein, triggering exposure of the myristate group. Interacts with host AP3D1; this interaction allows the polyprotein trafficking to multivesicular bodies during virus assembly. Part of the pre-integration complex (PIC) which is composed of viral genome, matrix protein, Vpr and integrase. In terms of assembly, homodimer; the homodimer further multimerizes as homohexamers or homopentamers. Interacts with human PPIA/CYPA. Interacts with human NUP153. Interacts with host PDZD8; this interaction stabilizes the capsid. Interacts with monkey TRIM5; this interaction destabilizes the capsid. Homodimer, whose active site consists of two apposed aspartic acid residues. As to quaternary structure, heterodimer of p66 RT and p51 RT (RT p66/p51). Heterodimerization of RT is essential for DNA polymerase activity. The overall folding of the subdomains is similar in p66 RT and p51 RT but the spatial arrangements of the subdomains are dramatically different. In terms of assembly, homotetramer; may further associate as a homohexadecamer. Part of the pre-integration complex (PIC) which is composed of viral genome, matrix protein, Vpr and integrase. Interacts with human SMARCB1/INI1 and human PSIP1/LEDGF isoform 1. Interacts with human KPNA3; this interaction might play a role in nuclear import of the pre-integration complex. Interacts with human NUP153; this interaction might play a role in nuclear import of the pre-integration complex. Mg(2+) serves as cofactor. Post-translationally, specific enzymatic cleavages by the viral protease yield mature proteins. The protease is released by autocatalytic cleavage. The polyprotein is cleaved during and after budding, this process is termed maturation. Proteolytic cleavage of p66 RT removes the RNase H domain to yield the p51 RT subunit. Nucleocapsid protein p7 might be further cleaved after virus entry.

Its subcellular location is the host cell membrane. It is found in the host endosome. The protein localises to the host multivesicular body. The protein resides in the virion membrane. It localises to the host nucleus. Its subcellular location is the host cytoplasm. It is found in the virion. The enzyme catalyses Endopeptidase for which the P1 residue is preferably hydrophobic.. The catalysed reaction is Endohydrolysis of RNA in RNA/DNA hybrids. Three different cleavage modes: 1. sequence-specific internal cleavage of RNA. Human immunodeficiency virus type 1 and Moloney murine leukemia virus enzymes prefer to cleave the RNA strand one nucleotide away from the RNA-DNA junction. 2. RNA 5'-end directed cleavage 13-19 nucleotides from the RNA end. 3. DNA 3'-end directed cleavage 15-20 nucleotides away from the primer terminus.. It carries out the reaction 3'-end directed exonucleolytic cleavage of viral RNA-DNA hybrid.. It catalyses the reaction DNA(n) + a 2'-deoxyribonucleoside 5'-triphosphate = DNA(n+1) + diphosphate. With respect to regulation, protease: The viral protease is inhibited by many synthetic protease inhibitors (PIs), such as amprenavir, atazanavir, indinavir, loprinavir, nelfinavir, ritonavir and saquinavir. Use of protease inhibitors in tritherapy regimens permit more ambitious therapeutic strategies. Reverse transcriptase/ribonuclease H: RT can be inhibited either by nucleoside RT inhibitors (NRTIs) or by non nucleoside RT inhibitors (NNRTIs). NRTIs act as chain terminators, whereas NNRTIs inhibit DNA polymerization by binding a small hydrophobic pocket near the RT active site and inducing an allosteric change in this region. Classical NRTIs are abacavir, adefovir (PMEA), didanosine (ddI), lamivudine (3TC), stavudine (d4T), tenofovir (PMPA), zalcitabine (ddC), and zidovudine (AZT). Classical NNRTIs are atevirdine (BHAP U-87201E), delavirdine, efavirenz (DMP-266), emivirine (I-EBU), and nevirapine (BI-RG-587). The tritherapies used as a basic effective treatment of AIDS associate two NRTIs and one NNRTI. In terms of biological role, mediates, with Gag polyprotein, the essential events in virion assembly, including binding the plasma membrane, making the protein-protein interactions necessary to create spherical particles, recruiting the viral Env proteins, and packaging the genomic RNA via direct interactions with the RNA packaging sequence (Psi). Gag-Pol polyprotein may regulate its own translation, by the binding genomic RNA in the 5'-UTR. At low concentration, the polyprotein would promote translation, whereas at high concentration, the polyprotein would encapsidate genomic RNA and then shut off translation. Targets the polyprotein to the plasma membrane via a multipartite membrane-binding signal, that includes its myristoylated N-terminus. Matrix protein is part of the pre-integration complex. Implicated in the release from host cell mediated by Vpu. Binds to RNA. Its function is as follows. Forms the conical core that encapsulates the genomic RNA-nucleocapsid complex in the virion. Most core are conical, with only 7% tubular. The core is constituted by capsid protein hexamer subunits. The core is disassembled soon after virion entry. Host restriction factors such as TRIM5-alpha or TRIMCyp bind retroviral capsids and cause premature capsid disassembly, leading to blocks in reverse transcription. Capsid restriction by TRIM5 is one of the factors which restricts HIV-1 to the human species. Host PIN1 apparently facilitates the virion uncoating. On the other hand, interactions with PDZD8 or CYPA stabilize the capsid. Functionally, encapsulates and protects viral dimeric unspliced genomic RNA (gRNA). Binds these RNAs through its zinc fingers. Acts as a nucleic acid chaperone which is involved in rearangement of nucleic acid secondary structure during gRNA retrotranscription. Also facilitates template switch leading to recombination. As part of the polyprotein, participates in gRNA dimerization, packaging, tRNA incorporation and virion assembly. In terms of biological role, aspartyl protease that mediates proteolytic cleavages of Gag and Gag-Pol polyproteins during or shortly after the release of the virion from the plasma membrane. Cleavages take place as an ordered, step-wise cascade to yield mature proteins. This process is called maturation. Displays maximal activity during the budding process just prior to particle release from the cell. Also cleaves Nef and Vif, probably concomitantly with viral structural proteins on maturation of virus particles. Hydrolyzes host EIF4GI and PABP1 in order to shut off the capped cellular mRNA translation. The resulting inhibition of cellular protein synthesis serves to ensure maximal viral gene expression and to evade host immune response. Multifunctional enzyme that converts the viral RNA genome into dsDNA in the cytoplasm, shortly after virus entry into the cell. This enzyme displays a DNA polymerase activity that can copy either DNA or RNA templates, and a ribonuclease H (RNase H) activity that cleaves the RNA strand of RNA-DNA heteroduplexes in a partially processive 3' to 5' endonucleasic mode. Conversion of viral genomic RNA into dsDNA requires many steps. A tRNA(3)-Lys binds to the primer-binding site (PBS) situated at the 5'-end of the viral RNA. RT uses the 3' end of the tRNA primer to perform a short round of RNA-dependent minus-strand DNA synthesis. The reading proceeds through the U5 region and ends after the repeated (R) region which is present at both ends of viral RNA. The portion of the RNA-DNA heteroduplex is digested by the RNase H, resulting in a ssDNA product attached to the tRNA primer. This ssDNA/tRNA hybridizes with the identical R region situated at the 3' end of viral RNA. This template exchange, known as minus-strand DNA strong stop transfer, can be either intra- or intermolecular. RT uses the 3' end of this newly synthesized short ssDNA to perform the RNA-dependent minus-strand DNA synthesis of the whole template. RNase H digests the RNA template except for two polypurine tracts (PPTs) situated at the 5'-end and near the center of the genome. It is not clear if both polymerase and RNase H activities are simultaneous. RNase H probably can proceed both in a polymerase-dependent (RNA cut into small fragments by the same RT performing DNA synthesis) and a polymerase-independent mode (cleavage of remaining RNA fragments by free RTs). Secondly, RT performs DNA-directed plus-strand DNA synthesis using the PPTs that have not been removed by RNase H as primers. PPTs and tRNA primers are then removed by RNase H. The 3' and 5' ssDNA PBS regions hybridize to form a circular dsDNA intermediate. Strand displacement synthesis by RT to the PBS and PPT ends produces a blunt ended, linear dsDNA copy of the viral genome that includes long terminal repeats (LTRs) at both ends. Its function is as follows. Catalyzes viral DNA integration into the host chromosome, by performing a series of DNA cutting and joining reactions. This enzyme activity takes place after virion entry into a cell and reverse transcription of the RNA genome in dsDNA. The first step in the integration process is 3' processing. This step requires a complex comprising the viral genome, matrix protein, Vpr and integrase. This complex is called the pre-integration complex (PIC). The integrase protein removes 2 nucleotides from each 3' end of the viral DNA, leaving recessed CA OH's at the 3' ends. In the second step, the PIC enters cell nucleus. This process is mediated through integrase and Vpr proteins, and allows the virus to infect a non dividing cell. This ability to enter the nucleus is specific of lentiviruses, other retroviruses cannot and rely on cell division to access cell chromosomes. In the third step, termed strand transfer, the integrase protein joins the previously processed 3' ends to the 5' ends of strands of target cellular DNA at the site of integration. The 5'-ends are produced by integrase-catalyzed staggered cuts, 5 bp apart. A Y-shaped, gapped, recombination intermediate results, with the 5'-ends of the viral DNA strands and the 3' ends of target DNA strands remaining unjoined, flanking a gap of 5 bp. The last step is viral DNA integration into host chromosome. This involves host DNA repair synthesis in which the 5 bp gaps between the unjoined strands are filled in and then ligated. Since this process occurs at both cuts flanking the HIV genome, a 5 bp duplication of host DNA is produced at the ends of HIV-1 integration. Alternatively, Integrase may catalyze the excision of viral DNA just after strand transfer, this is termed disintegration. The polypeptide is Gag-Pol polyprotein (gag-pol) (Homo sapiens (Human)).